Reading from the N-terminus, the 226-residue chain is ATP-dependent dethiobiotin synthetase BioD (226 aa).

Glycine 12–valine 17 serves as a coordination point for ATP. Threonine 16 is a Mg(2+) binding site. Residue lysine 37 is part of the active site. Residue threonine 41 coordinates substrate. ATP-binding positions include aspartate 49, glutamate 108–glycine 111, glycine 169–serine 170, and proline 197–glycine 199. Positions 49 and 108 each coordinate Mg(2+).

The protein belongs to the dethiobiotin synthetase family. Homodimer. Mg(2+) serves as cofactor.

Its subcellular location is the cytoplasm. The enzyme catalyses (7R,8S)-7,8-diammoniononanoate + CO2 + ATP = (4R,5S)-dethiobiotin + ADP + phosphate + 3 H(+). The protein operates within cofactor biosynthesis; biotin biosynthesis; biotin from 7,8-diaminononanoate: step 1/2. Functionally, catalyzes a mechanistically unusual reaction, the ATP-dependent insertion of CO2 between the N7 and N8 nitrogen atoms of 7,8-diaminopelargonic acid (DAPA, also called 7,8-diammoniononanoate) to form a ureido ring. The polypeptide is ATP-dependent dethiobiotin synthetase BioD (Mycobacterium bovis (strain ATCC BAA-935 / AF2122/97)).